The primary structure comprises 415 residues: MNDLLPEQSPAWQQVEAVIRRVAASYGYSEIRMPVLESTQLFKRSIGEVTDIVEKEMYTFDDRNGESVTLRPEGTASCVRAGNQHGLLYNQIQRLWYMGPMFRYERPQKGRYRQFHQFGIETFGLESADADAEVILLSARLWREFGLADQVELQLNSLGSNEARANYRDALKAYLSDYESELDDDSKRRLESNPLRILDSKDEKTQKILEGAPSLSEYWDAESKEHFEQLTARLEAAGISYTLNERLVRGLDYYNRTVFEWVTTALGAQGTVCAGGRYDGLVEQLGGKATPAVGFAMGMERLVLLLQEQGKLTPRRVVDAYLMPLGEEAELNAPRIAEQLRNELPELRLVSHCGGGSMKKQMKKADKSGAQVALIIGADEIAQQLVTVKPLRTAEEQQTLGWQALIEFLQPLTRG.

The protein belongs to the class-II aminoacyl-tRNA synthetase family. As to quaternary structure, homodimer.

Its subcellular location is the cytoplasm. It carries out the reaction tRNA(His) + L-histidine + ATP = L-histidyl-tRNA(His) + AMP + diphosphate + H(+). The polypeptide is Histidine--tRNA ligase (Idiomarina loihiensis (strain ATCC BAA-735 / DSM 15497 / L2-TR)).